A 317-amino-acid polypeptide reads, in one-letter code: Ribosomal protein L11 methyltransferase (317 aa).

Residues T158, G179, D201, and N244 each coordinate S-adenosyl-L-methionine.

The protein belongs to the methyltransferase superfamily. PrmA family.

Its subcellular location is the cytoplasm. It catalyses the reaction L-lysyl-[protein] + 3 S-adenosyl-L-methionine = N(6),N(6),N(6)-trimethyl-L-lysyl-[protein] + 3 S-adenosyl-L-homocysteine + 3 H(+). Its function is as follows. Methylates ribosomal protein L11. This is Ribosomal protein L11 methyltransferase from Streptococcus agalactiae serotype III (strain NEM316).